A 423-amino-acid chain; its full sequence is Endochitinase 1 (423 aa).

The N-terminal stretch at 1–22 is a signal peptide; sequence MPSLFAQSLAIIATLQATLGLA. One can recognise a GH18 domain in the interval 39–401; that stretch reads YVNAVYFTNW…GTSSNKLGGP (363 aa). 3 N-linked (GlcNAc...) asparagine glycosylation sites follow: Asn74, Asn78, and Asn96. Chitin contacts are provided by residues 103 to 104 and 130 to 133; these read GT and GGWT. Glu172 (proton donor) is an active-site residue. Residues Tyr173 and 238–241 contribute to the chitin site; that span reads MAYD. N-linked (GlcNAc...) asparagine glycosylation occurs at Asn248. Trp378 is a chitin binding site. Residues 380 to 423 form a disordered region; that stretch reads ASSDRSGSQSLIGTSSNKLGGPDSTENLLNYPDSKYDNMRKQMA. The span at 383-407 shows a compositional bias: polar residues; sequence DRSGSQSLIGTSSNKLGGPDSTENL. Residues 413-423 are compositionally biased toward basic and acidic residues; it reads SKYDNMRKQMA.

This sequence belongs to the glycosyl hydrolase 18 family. Chitinase class V subfamily.

It is found in the secreted. It carries out the reaction Random endo-hydrolysis of N-acetyl-beta-D-glucosaminide (1-&gt;4)-beta-linkages in chitin and chitodextrins.. Secreted chitinase involved in the degradation of chitin, a component of the cell walls of fungi and exoskeletal elements of some animals (including worms and arthropods). Participates in the infection process and directly acts in the penetration process of the host cuticle. The sequence is that of Endochitinase 1 (chit1) from Metarhizium anisopliae (Entomophthora anisopliae).